Here is a 399-residue protein sequence, read N- to C-terminus: Methylthioribose kinase (399 aa).

Residues N40, K57, and 111–113 (EDL) contribute to the ATP site. A substrate-binding site is contributed by D229. 246–248 (DAE) provides a ligand contact to ATP. Substrate is bound at residue R344.

Belongs to the methylthioribose kinase family. Homodimer.

It catalyses the reaction 5-(methylsulfanyl)-D-ribose + ATP = 5-(methylsulfanyl)-alpha-D-ribose 1-phosphate + ADP + H(+). Its pathway is amino-acid biosynthesis; L-methionine biosynthesis via salvage pathway; S-methyl-5-thio-alpha-D-ribose 1-phosphate from S-methyl-5'-thioadenosine (hydrolase route): step 2/2. Catalyzes the phosphorylation of methylthioribose into methylthioribose-1-phosphate. The protein is Methylthioribose kinase of Klebsiella pneumoniae (strain 342).